The sequence spans 58 residues: Putative antitoxin VapB16 (58 aa).

In terms of biological role, putative antitoxin component of a possible type II toxin-antitoxin (TA) system. The cognate toxin is VapC16. This is Putative antitoxin VapB16 (vapB16) from Mycobacterium tuberculosis (strain ATCC 25618 / H37Rv).